The chain runs to 226 residues: MKLGLVAGMLAVCFSFSSVAMTLKLTPEIDLLVVDGKNMSGSLLKGADSLELNSGMHQILFKVIKTLPTDPLVLYSSPPLIVVFNAHNTRSVAIKLPVINTLRDGHQFSKNPLYQLIGDNGHPLSVRHDVLRQDHLNNSTTLETVMAAYNVGKYNASVPAFAAIPPSPVSAVPGTTIPVAGVNTPHKTASLQGENVTEQMLQYWFLQANPETQKRFLIWAKKQPIH.

The N-terminal stretch at Met-1 to Ala-20 is a signal peptide.

This sequence belongs to the UPF0319 family.

This is UPF0319 protein YpAngola_A3206 from Yersinia pestis bv. Antiqua (strain Angola).